The following is a 1145-amino-acid chain: Cellulose synthase-like protein D3 (1145 aa).

A compositionally biased stretch (polar residues) spans 1–19; the sequence is MASNNHFMNSRSNLSTNSD. Disordered regions lie at residues 1-38 and 189-208; these read MASN…TFAR and DNNK…SKMD. The next 2 membrane-spanning stretches (helical) occupy residues 289–309 and 319–339; these read VISP…LFLM and AIWL…SWLL. Aspartate 419 is a catalytic residue. At serine 755 the chain carries Phosphoserine. Aspartate 848 is an active-site residue. The next 6 membrane-spanning stretches (helical) occupy residues 930–950, 956–976, 1002–1022, 1045–1065, 1079–1099, and 1109–1129; these read FFLI…QFIV, TFLV…LLEI, LAAV…SFTL, SLMI…AVGF, LIGG…FAKG, and TIVY…WVAI.

The protein belongs to the glycosyltransferase 2 family. Plant cellulose synthase-like D subfamily. As to expression, preferentially expressed in root hair cells. Expressed in roots, leaves, stems, flowers and siliques.

Its subcellular location is the golgi apparatus membrane. In terms of biological role, thought to be a Golgi-localized beta-glycan synthase that polymerize the backbones of noncellulosic polysaccharides (hemicelluloses) of plant cell wall. Required for synthesis of a cell wall polysaccharide essential for root hair elongation, but not initiation. May be the functional ortholog of rice CSLD1. The polypeptide is Cellulose synthase-like protein D3 (CSLD3) (Arabidopsis thaliana (Mouse-ear cress)).